The primary structure comprises 319 residues: MIDLAPLVRRLAGTPLADWANGLQAQLDTKMAKGHGDLQRWQSALDALPDLQPERIDLIDSFTLEAECNGETRTVLRKALLGLSPWRKGPFNVFGVHIDTEWRSDWKWSRVSPHLDLKGKRVLDVGCGNGYYQWRMLGAGADSVIGVDPNWLFFCQFQAMQRYLPDLPAWHLPFALEDLPANLEGFDTVFSMGVLYHRKSPIDHLLALKDCLVKGGELVMETLVVPGDVHQVLVPEDRYAQMRNVWFLPSVPALELWMRRAGFTDVRCVDVSHTTVDEQRSTEWMRFQSLSDYLDPTDHSKTVEGLPAPMRAVIVGRKP.

Carboxy-S-adenosyl-L-methionine-binding positions include Lys88, Trp102, Lys107, Gly126, 176 to 177, Met192, Tyr196, and Arg311; that span reads LE.

This sequence belongs to the class I-like SAM-binding methyltransferase superfamily. CmoB family. Homotetramer.

It carries out the reaction carboxy-S-adenosyl-L-methionine + 5-hydroxyuridine(34) in tRNA = 5-carboxymethoxyuridine(34) in tRNA + S-adenosyl-L-homocysteine + H(+). Catalyzes carboxymethyl transfer from carboxy-S-adenosyl-L-methionine (Cx-SAM) to 5-hydroxyuridine (ho5U) to form 5-carboxymethoxyuridine (cmo5U) at position 34 in tRNAs. This Pseudomonas syringae pv. syringae (strain B728a) protein is tRNA U34 carboxymethyltransferase.